We begin with the raw amino-acid sequence, 716 residues long: Interleukin-31 receptor subunit alpha (716 aa).

Residues 1–18 (MWTLALWAFSFLCKFSLA) form the signal peptide. At 19–499 (VLPTKPENIS…TNGVRINFKT (481 aa)) the chain is on the extracellular side. Fibronectin type-III domains lie at 23-115 (KPEN…IAKT), 117-211 (PPII…TMEE), 213-304 (PHVL…ILRI), 305-403 (PDVH…QAYA), and 408-502 (PLKG…TLSI). Residues Asn-36, Asn-48, and Asn-64 are each glycosylated (N-linked (GlcNAc...) asparagine). Residue Asn-382 is glycosylated (N-linked (GlcNAc...) asparagine). A helical transmembrane segment spans residues 500–520 (LSISVFEIVLLTSLVGGGLLL). The Cytoplasmic portion of the chain corresponds to 521–716 (LSIKTVTFGL…NIPEHSKGEV (196 aa)). 2 disordered regions span residues 622 to 641 (EYVT…FKEP) and 648 to 696 (ASED…LKNS). Positions 670–679 (QPSSSCQSPG) are enriched in polar residues.

This sequence belongs to the type I cytokine receptor family. Type 2 subfamily. As to quaternary structure, heterodimer with OSMR. Interacts with JAK1 and STAT3. N-glycosylated. In terms of tissue distribution, expressed in a subset of dorsal root ganglia neurons. Expressed in spinal cord and trigeminal ganglion (at protein level). Expressed in skin, testis, bone marrow and thymus.

It is found in the cell membrane. It localises to the presynaptic cell membrane. Its subcellular location is the cell projection. The protein resides in the axon. Its function is as follows. Associates with OSMR to form the interleukin-31 receptor which activates STAT3 and to a lower extent STAT1 and STAT5. May function in skin immunity. Mediates IL31-induced itch, probably in a manner dependent on cation channels TRPA1 and TRPV1. Positively regulates numbers and cycling status of immature subsets of myeloid progenitor cells in bone marrow in vivo and enhances myeloid progenitor cell survival in vitro. This Mus musculus (Mouse) protein is Interleukin-31 receptor subunit alpha (Il31ra).